We begin with the raw amino-acid sequence, 534 residues long: Probable glycine dehydrogenase (decarboxylating) subunit 2 (534 aa).

Lysine 273 carries the post-translational modification N6-(pyridoxal phosphate)lysine.

Belongs to the GcvP family. C-terminal subunit subfamily. In terms of assembly, the glycine cleavage system is composed of four proteins: P, T, L and H. In this organism, the P 'protein' is a heterodimer of two subunits. Requires pyridoxal 5'-phosphate as cofactor.

It carries out the reaction N(6)-[(R)-lipoyl]-L-lysyl-[glycine-cleavage complex H protein] + glycine + H(+) = N(6)-[(R)-S(8)-aminomethyldihydrolipoyl]-L-lysyl-[glycine-cleavage complex H protein] + CO2. The glycine cleavage system catalyzes the degradation of glycine. The P protein binds the alpha-amino group of glycine through its pyridoxal phosphate cofactor; CO(2) is released and the remaining methylamine moiety is then transferred to the lipoamide cofactor of the H protein. The sequence is that of Probable glycine dehydrogenase (decarboxylating) subunit 2 from Bacillus cereus (strain ATCC 14579 / DSM 31 / CCUG 7414 / JCM 2152 / NBRC 15305 / NCIMB 9373 / NCTC 2599 / NRRL B-3711).